Consider the following 894-residue polypeptide: Glutamate receptor 3 (894 aa).

Positions 1 to 28 are cleaved as a signal peptide; sequence MARQKKMGQNVLRAVFFLVLGLLGHSHG. Over 29–552 the chain is Extracellular; it reads GFPNTISIGG…GVFSFLDPLA (524 aa). 5 N-linked (GlcNAc...) asparagine glycosylation sites follow: Asn63, Asn266, Asn380, Asn415, and Asn422. A disulfide bridge connects residues Cys91 and Cys340. L-glutamate is bound by residues Pro508, Thr510, and Arg515. A helical membrane pass occupies residues 553–573; it reads YEIWMCIVFASIGVSVVLFLV. Residues 574–602 are Cytoplasmic-facing; sequence SRFSPYEWHLEDNNEEPRDPQSPPDPPNE. The helical; Pore-forming intramembrane region spans 603–618; the sequence is FGIFNSLWFSLGAFMQ. An intramembrane segment occupies 619 to 621; the sequence is QGC. Residue Cys621 is the site of S-palmitoyl cysteine attachment. Residues 622 to 627 lie on the Cytoplasmic side of the membrane; the sequence is DISPRS. A helical membrane pass occupies residues 628–648; that stretch reads LSGRIVGGVWWFFTLIIISSY. At 649–823 the chain is on the extracellular side; the sequence is TANLAAFLTV…DKTSALSLSN (175 aa). L-glutamate-binding residues include Ser686, Thr687, and Glu737. Residues Cys750 and Cys805 are joined by a disulfide bond. Residues 824-844 form a helical membrane-spanning segment; it reads VAGVFYILVGGLGLAMMVALI. The Cytoplasmic segment spans residues 845-894; sequence EFCYKSRAESKRMKLTKNTQNFKPAPATNTQNYATYREGYNVYGTESVKI. A lipid anchor (S-palmitoyl cysteine) is attached at Cys847. Tyr877 and Tyr887 each carry phosphotyrosine.

It belongs to the glutamate-gated ion channel (TC 1.A.10.1) family. GRIA3 subfamily. In terms of assembly, homotetramer or heterotetramer of pore-forming glutamate receptor subunits. Tetramers may be formed by the dimerization of dimers. Interacts with PICK1, GRIP1 and GRIP2. Found in a complex with GRIA1, GRIA2, GRIA4, CNIH2, CNIH3, CACNG2, CACNG3, CACNG4, CACNG5, CACNG7 and CACNG8. Interacts with CACNG5. Found in a complex with GRIA1, GRIA2, GRIA4, DLG4, CACNG8 and CNIH2.

The protein resides in the cell membrane. It localises to the postsynaptic cell membrane. The protein localises to the postsynaptic density membrane. The enzyme catalyses Ca(2+)(in) = Ca(2+)(out). Functionally, ionotropic glutamate receptor that functions as a ligand-gated cation channel, gated by L-glutamate and glutamatergic agonists such as alpha-amino-3-hydroxy-5-methyl-4-isoxazolepropionic acid (AMPA), quisqualic acid, and kainic acid. L-glutamate acts as an excitatory neurotransmitter at many synapses in the central nervous system and plays an important role in fast excitatory synaptic transmission by inducing long-term potentiation. Binding of the excitatory neurotransmitter L-glutamate induces a conformation change, leading to the opening of the cation channel, and thereby converts the chemical signal to an electrical impulse upon entry of calcium. The receptor then desensitizes rapidly and enters a transient inactive state, characterized by the presence of bound agonist. In the presence of CACNG8, shows resensitization which is characterized by a delayed accumulation of current flux upon continued application of glutamate. The chain is Glutamate receptor 3 from Macaca fascicularis (Crab-eating macaque).